Consider the following 130-residue polypeptide: Small ribosomal subunit protein uS11 (130 aa).

Residues 109-130 (EDVTPIPHDGTGRPGGKRGRRV) are disordered.

This sequence belongs to the universal ribosomal protein uS11 family. As to quaternary structure, part of the 30S ribosomal subunit.

In terms of biological role, located on the platform of the 30S subunit. This is Small ribosomal subunit protein uS11 from Methanosphaera stadtmanae (strain ATCC 43021 / DSM 3091 / JCM 11832 / MCB-3).